We begin with the raw amino-acid sequence, 88 residues long: Small ribosomal subunit protein uS17 (88 aa).

It belongs to the universal ribosomal protein uS17 family. Part of the 30S ribosomal subunit.

Functionally, one of the primary rRNA binding proteins, it binds specifically to the 5'-end of 16S ribosomal RNA. This chain is Small ribosomal subunit protein uS17, found in Pseudomonas aeruginosa (strain LESB58).